A 98-amino-acid chain; its full sequence is HssA/B-like protein 36 (98 aa).

The tract at residues 1 to 29 (MTLFSSISSISNPMTSSKSSISSFGSGTS) is disordered.

The protein belongs to the hssA/B family.

This is HssA/B-like protein 36 (hssl36) from Dictyostelium discoideum (Social amoeba).